The chain runs to 61 residues: Small ribosomal subunit protein uS14 (61 aa).

Cysteine 24, cysteine 27, cysteine 40, and cysteine 43 together coordinate Zn(2+).

Belongs to the universal ribosomal protein uS14 family. Zinc-binding uS14 subfamily. Part of the 30S ribosomal subunit. Contacts proteins S3 and S10. It depends on Zn(2+) as a cofactor.

In terms of biological role, binds 16S rRNA, required for the assembly of 30S particles and may also be responsible for determining the conformation of the 16S rRNA at the A site. This chain is Small ribosomal subunit protein uS14, found in Bacillus anthracis (strain A0248).